The sequence spans 156 residues: Endoribonuclease YbeY (156 aa).

His-122, His-126, and His-132 together coordinate Zn(2+).

It belongs to the endoribonuclease YbeY family. Zn(2+) is required as a cofactor.

Its subcellular location is the cytoplasm. Its function is as follows. Single strand-specific metallo-endoribonuclease involved in late-stage 70S ribosome quality control and in maturation of the 3' terminus of the 16S rRNA. This chain is Endoribonuclease YbeY, found in Geobacillus thermodenitrificans (strain NG80-2).